The following is a 183-amino-acid chain: Translocon-associated protein subunit beta (183 aa).

The signal sequence occupies residues 1–17 (MRLLSFVVLALFAVTQA). The Lumenal portion of the chain corresponds to 18–149 (EEGARLLASK…DRRFSPHFLD (132 aa)). 2 N-linked (GlcNAc...) asparagine glycosylation sites follow: Asn-88 and Asn-104. The helical transmembrane segment at 150–169 (WAAFGVMTLPSIGIPLLLWY) threads the bilayer. The Cytoplasmic segment spans residues 170–183 (SSKRKYDTPKTKKN).

This sequence belongs to the TRAP-beta family. In terms of assembly, heterotetramer of TRAP-alpha, TRAP-beta, TRAP-delta and TRAP-gamma. Interacts with STING1.

It is found in the endoplasmic reticulum membrane. TRAP proteins are part of a complex whose function is to bind calcium to the ER membrane and thereby regulate the retention of ER resident proteins. This is Translocon-associated protein subunit beta (SSR2) from Homo sapiens (Human).